A 340-amino-acid polypeptide reads, in one-letter code: Dihydroorotate dehydrogenase (quinone) (340 aa).

Residues 62–66 and Thr-86 contribute to the FMN site; that span reads AGMDK. Lys-66 is a binding site for substrate. Residue 111–115 coordinates substrate; sequence NRMGF. FMN contacts are provided by Asn-139 and Asn-172. Residue Asn-172 participates in substrate binding. Ser-175 serves as the catalytic Nucleophile. Asn-177 provides a ligand contact to substrate. Residues Lys-217 and Thr-245 each contribute to the FMN site. Substrate is bound at residue 246 to 247; sequence NT. FMN contacts are provided by residues Gly-268, Gly-297, and 318–319; that span reads YS.

It belongs to the dihydroorotate dehydrogenase family. Type 2 subfamily. In terms of assembly, monomer. It depends on FMN as a cofactor.

The protein resides in the cell membrane. The catalysed reaction is (S)-dihydroorotate + a quinone = orotate + a quinol. It functions in the pathway pyrimidine metabolism; UMP biosynthesis via de novo pathway; orotate from (S)-dihydroorotate (quinone route): step 1/1. In terms of biological role, catalyzes the conversion of dihydroorotate to orotate with quinone as electron acceptor. The protein is Dihydroorotate dehydrogenase (quinone) of Shewanella woodyi (strain ATCC 51908 / MS32).